Reading from the N-terminus, the 325-residue chain is Aldo-keto reductase family 1 member A1 (325 aa).

Position 2 is an N-acetylalanine (alanine 2). Residue serine 4 is modified to Phosphoserine. NADP(+) contacts are provided by residues 11-20 (GQKMPLIGLG), threonine 21, tryptophan 22, and aspartate 45. Residue tyrosine 50 is the Proton donor of the active site. The residue at position 127 (lysine 127) is an N6-acetyllysine; alternate. Lysine 127 is modified (N6-succinyllysine; alternate). Residue lysine 145 is modified to N6-succinyllysine. The NADP(+) site is built by serine 162, asparagine 163, serine 211, leucine 213, serine 215, serine 216, lysine 263, serine 264, valine 265, threonine 266, arginine 269, glutamine 272, and asparagine 273. A Phosphoserine modification is found at serine 211.

It belongs to the aldo/keto reductase family. Monomer.

It localises to the cytoplasm. It is found in the cytosol. Its subcellular location is the apical cell membrane. It catalyses the reaction a primary alcohol + NADP(+) = an aldehyde + NADPH + H(+). It carries out the reaction glycerol + NADP(+) = D-glyceraldehyde + NADPH + H(+). The enzyme catalyses glycerol + NADP(+) = L-glyceraldehyde + NADPH + H(+). The catalysed reaction is L-gulonate + NADP(+) = aldehydo-D-glucuronate + NADPH + H(+). It catalyses the reaction L-gulono-1,4-lactone + NADP(+) = D-glucurono-3,6-lactone + NADPH + H(+). It carries out the reaction allyl alcohol + NADP(+) = acrolein + NADPH + H(+). The enzyme catalyses hydroxyacetone + NADP(+) = methylglyoxal + NADPH + H(+). The catalysed reaction is 3-deoxyfructose + NADP(+) = 3-deoxyglucosone + NADPH + H(+). It catalyses the reaction (R)-mevalonate + NADP(+) = (R)-mevaldate + NADPH + H(+). It carries out the reaction pyridine 3-methanol + NADP(+) = pyridine-3-carbaldehyde + NADPH + H(+). The enzyme catalyses S-nitroso-CoA + NADPH + H(+) = sulfinamide-CoA + NADP(+). The catalysed reaction is S-nitrosoglutathione + NADPH + H(+) = S-(hydroxysulfenamide)glutathione + NADP(+). Catalyzes the NADPH-dependent reduction of a wide variety of carbonyl-containing compounds to their corresponding alcohols. Displays enzymatic activity towards endogenous metabolites such as aromatic and aliphatic aldehydes, ketones, monosaccharides and bile acids, with a preference for negatively charged substrates, such as glucuronate and succinic semialdehyde. Plays an important role in ascorbic acid biosynthesis by catalyzing the reduction of D-glucuronic acid and D-glucurono-gamma-lactone. Functions as a detoxifiying enzyme by reducing a range of toxic aldehydes. Reduces methylglyoxal and 3-deoxyglucosone, which are present at elevated levels under hyperglycemic conditions and are cytotoxic. Involved also in the detoxification of lipid-derived aldehydes like acrolein. Plays a role in the activation of procarcinogens, such as polycyclic aromatic hydrocarbon trans-dihydrodiols, and in the metabolism of various xenobiotics and drugs. Also acts as an inhibitor of protein S-nitrosylation by mediating degradation of S-nitroso-coenzyme A (S-nitroso-CoA), a cofactor required to S-nitrosylate proteins. S-nitroso-CoA reductase activity is involved in reprogramming intermediary metabolism in renal proximal tubules, notably by inhibiting protein S-nitrosylation of isoform 2 of PKM (PKM2). Also acts as a S-nitroso-glutathione reductase by catalyzing the NADPH-dependent reduction of S-nitrosoglutathione. Displays no reductase activity towards retinoids. The chain is Aldo-keto reductase family 1 member A1 (AKR1A1) from Sus scrofa (Pig).